Reading from the N-terminus, the 265-residue chain is Phosphatidylglycerol--prolipoprotein diacylglyceryl transferase (265 aa).

Transmembrane regions (helical) follow at residues 10-30, 56-76, 87-107, and 117-137; these read VAIA…LIGI, LVFW…VLFY, LILQ…GVLL, and GKGF…GLGA. Arginine 139 provides a ligand contact to a 1,2-diacyl-sn-glycero-3-phospho-(1'-sn-glycerol). 3 helical membrane-spanning segments follow: residues 172-192, 200-220, and 227-247; these read PSQL…LWFY, MAVS…VEFV, and LGYL…PMIL.

The protein belongs to the Lgt family.

Its subcellular location is the cell inner membrane. The enzyme catalyses L-cysteinyl-[prolipoprotein] + a 1,2-diacyl-sn-glycero-3-phospho-(1'-sn-glycerol) = an S-1,2-diacyl-sn-glyceryl-L-cysteinyl-[prolipoprotein] + sn-glycerol 1-phosphate + H(+). It functions in the pathway protein modification; lipoprotein biosynthesis (diacylglyceryl transfer). Catalyzes the transfer of the diacylglyceryl group from phosphatidylglycerol to the sulfhydryl group of the N-terminal cysteine of a prolipoprotein, the first step in the formation of mature lipoproteins. This chain is Phosphatidylglycerol--prolipoprotein diacylglyceryl transferase, found in Azotobacter vinelandii (strain DJ / ATCC BAA-1303).